The primary structure comprises 104 residues: Iron-sulfur cluster assembly protein CyaY (104 aa).

Belongs to the frataxin family.

Involved in iron-sulfur (Fe-S) cluster assembly. May act as a regulator of Fe-S biogenesis. The sequence is that of Iron-sulfur cluster assembly protein CyaY from Tolumonas auensis (strain DSM 9187 / NBRC 110442 / TA 4).